The sequence spans 338 residues: Lipoate-protein ligase A (338 aa).

Residues 29–216 (PATQRVLFLW…AFFAHYGERV (188 aa)) enclose the BPL/LPL catalytic domain. Residues R71, 76-79 (GAVF), and K134 each bind ATP. Residue K134 coordinates (R)-lipoate.

The protein belongs to the LplA family. As to quaternary structure, monomer.

It is found in the cytoplasm. It carries out the reaction L-lysyl-[lipoyl-carrier protein] + (R)-lipoate + ATP = N(6)-[(R)-lipoyl]-L-lysyl-[lipoyl-carrier protein] + AMP + diphosphate + H(+). It functions in the pathway protein modification; protein lipoylation via exogenous pathway; protein N(6)-(lipoyl)lysine from lipoate: step 1/2. It participates in protein modification; protein lipoylation via exogenous pathway; protein N(6)-(lipoyl)lysine from lipoate: step 2/2. Catalyzes both the ATP-dependent activation of exogenously supplied lipoate to lipoyl-AMP and the transfer of the activated lipoyl onto the lipoyl domains of lipoate-dependent enzymes. This is Lipoate-protein ligase A from Escherichia coli (strain SMS-3-5 / SECEC).